A 205-amino-acid polypeptide reads, in one-letter code: NAD(P)H dehydrogenase (quinone) (205 aa).

Residues 3 to 194 enclose the Flavodoxin-like domain; it reads VLVVYYSMYG…AAARYQGKHV (192 aa). FMN contacts are provided by residues 9-14 and 82-84; these read SMYGHI and TRF. Position 11 (tyrosine 11) interacts with NAD(+). Tryptophan 102 is a binding site for substrate. FMN is bound at residue histidine 138.

Belongs to the WrbA family. FMN is required as a cofactor.

It catalyses the reaction a quinone + NADH + H(+) = a quinol + NAD(+). The catalysed reaction is a quinone + NADPH + H(+) = a quinol + NADP(+). This chain is NAD(P)H dehydrogenase (quinone), found in Geotalea daltonii (strain DSM 22248 / JCM 15807 / FRC-32) (Geobacter daltonii).